Here is a 135-residue protein sequence, read N- to C-terminus: Nucleoside diphosphate kinase (135 aa).

Lys9, Tyr57, Arg85, Thr91, Arg102, and Asn112 together coordinate ATP. His115 (pros-phosphohistidine intermediate) is an active-site residue.

The protein belongs to the NDK family. In terms of assembly, homotetramer. Mg(2+) serves as cofactor.

It is found in the cytoplasm. The enzyme catalyses a 2'-deoxyribonucleoside 5'-diphosphate + ATP = a 2'-deoxyribonucleoside 5'-triphosphate + ADP. The catalysed reaction is a ribonucleoside 5'-diphosphate + ATP = a ribonucleoside 5'-triphosphate + ADP. In terms of biological role, major role in the synthesis of nucleoside triphosphates other than ATP. The ATP gamma phosphate is transferred to the NDP beta phosphate via a ping-pong mechanism, using a phosphorylated active-site intermediate. The sequence is that of Nucleoside diphosphate kinase from Thermoanaerobacter pseudethanolicus (strain ATCC 33223 / 39E) (Clostridium thermohydrosulfuricum).